The primary structure comprises 634 residues: Frizzled and smoothened-like protein D (634 aa).

A signal peptide spans M1–C21. At Q22–K257 the chain is on the extracellular side. The region spanning D34–G178 is the FZ domain. N-linked (GlcNAc...) asparagine glycosylation is found at N126, N168, N215, N243, and N254. A helical membrane pass occupies residues A258–I278. The Cytoplasmic segment spans residues K279–C287. The chain crosses the membrane as a helical span at residues I288–V308. At G309 to S335 the chain is on the extracellular side. A helical transmembrane segment spans residues I336–Y356. The Cytoplasmic portion of the chain corresponds to S357–R368. The helical transmembrane segment at Y369–K389 threads the bilayer. Over K390 to A410 the chain is Extracellular. A helical transmembrane segment spans residues I411–I431. Residues F432–K454 are Cytoplasmic-facing. Residues P455–D475 traverse the membrane as a helical segment. At S476–S513 the chain is on the extracellular side. A helical transmembrane segment spans residues Y514–T534. Residues S535–I634 are Cytoplasmic-facing. Residues V560 to K624 are disordered. Low complexity-rich tracts occupy residues S572–T592 and D609–N622.

Belongs to the G-protein coupled receptor Fz/Smo family.

It localises to the membrane. The chain is Frizzled and smoothened-like protein D (fslD) from Dictyostelium discoideum (Social amoeba).